A 644-amino-acid chain; its full sequence is Exoribonuclease 2 (644 aa).

The 328-residue stretch at 189-516 folds into the RNB domain; that stretch reads RQDLTALNFV…NHRLLKAVIK (328 aa). Residues 561–643 enclose the S1 motif domain; it reads NTRFAAEIID…ETRSIIARPA (83 aa).

It belongs to the RNR ribonuclease family. RNase II subfamily.

Its subcellular location is the cytoplasm. The catalysed reaction is Exonucleolytic cleavage in the 3'- to 5'-direction to yield nucleoside 5'-phosphates.. Its function is as follows. Involved in mRNA degradation. Hydrolyzes single-stranded polyribonucleotides processively in the 3' to 5' direction. This Salmonella gallinarum (strain 287/91 / NCTC 13346) protein is Exoribonuclease 2.